A 297-amino-acid chain; its full sequence is Bax inhibitor 1 (297 aa).

The Lumenal segment spans residues 1-53; sequence MSGPPPPYEEQSSHLYGQPASSQDGNAFIPEDFKYSTVVISCEPIIRQRFMHK. Residues 54–74 form a helical membrane-spanning segment; sequence VYSLLSCQLLASLSFCYWASV. The Cytoplasmic portion of the chain corresponds to 75 to 85; that stretch reads STSLQNFIMSH. The chain crosses the membrane as a helical span at residues 86–106; it reads IALFYICMVVSLVSCIWLAVS. Residues 107-146 lie on the Lumenal side of the membrane; that stretch reads PRPEDYEASVPEPLLTGSSEEPAQEQRRLPWYVLSSYKQK. Residues 147–167 form a helical membrane-spanning segment; the sequence is LTLLSIFTLSEAYCLSLVTLA. Residues 168-171 are Cytoplasmic-facing; it reads YDKD. A helical transmembrane segment spans residues 172 to 192; sequence TVLSALLITTIVVVGVSLTAL. At 193 to 208 the chain is on the lumenal side; the sequence is SERFENVLNSATSIYY. The helical transmembrane segment at 209-229 threads the bilayer; the sequence is WLNWGLWIMIGMGLTALLFGW. Topologically, residues 230–239 are cytoplasmic; that stretch reads NTHSSKFNLL. Residues 240–260 form a helical membrane-spanning segment; that stretch reads YGWLGAILFTAYLFIDTQLIF. Residues 261–270 lie on the Lumenal side of the membrane; sequence RKVYPDEEVR. A helical membrane pass occupies residues 271-291; it reads CAMMLYLDIVNLFLSILRILA. At 292–297 the chain is on the cytoplasmic side; sequence NSNDDN.

This sequence belongs to the BI1 family. LFG subfamily.

It localises to the endoplasmic reticulum membrane. The protein resides in the vacuole membrane. It is found in the mitochondrion membrane. Functionally, links the unfolded protein response and programmed cell death and mediates mitochondrial-dependent apoptosis. Induces cell death and disruption of the mitochondrial transmembrane potential via the mitochondrial phosphate carrier MIR1. Dispensible for starvation-induced autophagy. This Saccharomyces cerevisiae (strain ATCC 204508 / S288c) (Baker's yeast) protein is Bax inhibitor 1 (BXI1).